Here is an 811-residue protein sequence, read N- to C-terminus: G-type lectin S-receptor-like serine/threonine-protein kinase LECRK2 (811 aa).

An N-terminal signal peptide occupies residues 1 to 23 (MAPLLFLPILQLLLLYCTKSAQA). The region spanning 24 to 153 (QLNISIGSSL…DGATKWESFG (130 aa)) is the Bulb-type lectin domain. Residues 24 to 464 (QLNISIGSSL…DKKYWILGSS (441 aa)) lie on the Extracellular side of the membrane. Residues Asn-26, Asn-39, Asn-59, Asn-219, Asn-226, Asn-237, and Asn-242 are each glycosylated (N-linked (GlcNAc...) asparagine). The EGF-like; atypical domain maps to 292–344 (PENICQTIQTKVGSGACGFNSYCTFDGTKNTTNCLCPQRYKFFDNERTYKGCR). Intrachain disulfides connect Cys-296–Cys-314, Cys-308–Cys-325, Cys-327–Cys-343, Cys-389–Cys-411, and Cys-393–Cys-399. N-linked (GlcNAc...) asparagine glycosylation is present at Asn-321. One can recognise a PAN domain in the interval 352–436 (CDLDETAAMV…LQATVLLKVP (85 aa)). A helical transmembrane segment spans residues 465–485 (LFFGSSVLVNFLLIFVLLFGT). The Cytoplasmic portion of the chain corresponds to 486 to 811 (YCSITSRKKT…DPSSYISSLA (326 aa)). One can recognise a Protein kinase domain in the interval 521–795 (GGFHEVLGTG…KVMQMLDGAV (275 aa)). Residues 527-535 (LGTGASGIV) and Lys-551 each bind ATP. The active-site Proton acceptor is the Asp-645.

Belongs to the protein kinase superfamily. Ser/Thr protein kinase family.

The protein resides in the membrane. The enzyme catalyses L-seryl-[protein] + ATP = O-phospho-L-seryl-[protein] + ADP + H(+). It catalyses the reaction L-threonyl-[protein] + ATP = O-phospho-L-threonyl-[protein] + ADP + H(+). Functionally, involved in resistance against the herbivorous insect brown planthopper (N.lugens, BPH). Member of the BPH3 (BPH resistance locus 3) cluster which contains LECRK1, LECRK2 and LECRK3. The polypeptide is G-type lectin S-receptor-like serine/threonine-protein kinase LECRK2 (Oryza sativa subsp. japonica (Rice)).